The sequence spans 856 residues: Structure-specific endonuclease subunit SLX4 (856 aa).

The span at 1 to 19 (MDNAAIASQSNTPPSNGRS) shows a compositional bias: polar residues. Disordered stretches follow at residues 1-24 (MDNA…ARFV), 39-61 (IEPS…SKSP), 88-121 (VDSP…HKMA), 139-201 (KTRK…TDNE), 296-326 (GIQT…KKPQ), 362-392 (KKMG…GNGP), 621-640 (SKSS…SQGD), 653-688 (RSDS…SNEG), and 715-742 (DSVG…QDCD). The span at 51 to 60 (STLLTSLSKS) shows a compositional bias: low complexity. A compositionally biased stretch (basic residues) spans 139–152 (KTRKKKAATAKRTR). Polar residues predominate over residues 296-309 (GIQTPTESRPATND). Positions 673-686 (SVKSQESKSFSLSN) are enriched in polar residues.

The protein belongs to the SLX4 family. In terms of assembly, forms a heterodimer with SLX1. Phosphorylated in response to DNA damage.

It localises to the nucleus. Its function is as follows. Regulatory subunit of the SLX1-SLX4 structure-specific endonuclease that resolves DNA secondary structures generated during DNA repair and recombination. Has endonuclease activity towards branched DNA substrates, introducing single-strand cuts in duplex DNA close to junctions with ss-DNA. In Ajellomyces dermatitidis (strain ER-3 / ATCC MYA-2586) (Blastomyces dermatitidis), this protein is Structure-specific endonuclease subunit SLX4.